Here is a 200-residue protein sequence, read N- to C-terminus: Imidazoleglycerol-phosphate dehydratase (200 aa).

Belongs to the imidazoleglycerol-phosphate dehydratase family.

It is found in the cytoplasm. The catalysed reaction is D-erythro-1-(imidazol-4-yl)glycerol 3-phosphate = 3-(imidazol-4-yl)-2-oxopropyl phosphate + H2O. Its pathway is amino-acid biosynthesis; L-histidine biosynthesis; L-histidine from 5-phospho-alpha-D-ribose 1-diphosphate: step 6/9. The chain is Imidazoleglycerol-phosphate dehydratase from Chlorobium phaeovibrioides (strain DSM 265 / 1930) (Prosthecochloris vibrioformis (strain DSM 265)).